Consider the following 475-residue polypeptide: D-lactate dehydrogenase (475 aa).

Positions 43-222 (YGKARPEVLV…TELTLKVIPA (180 aa)) constitute an FAD-binding PCMH-type domain.

Belongs to the FAD-binding oxidoreductase/transferase type 4 family. FAD is required as a cofactor. The cofactor is Zn(2+).

It catalyses the reaction (R)-lactate + A = pyruvate + AH2. In terms of biological role, catalyzes the dehydrogenation of (R)-lactate (D-lactate) to pyruvate. Active in vitro with the artificial electron acceptor 2,6-dichlorophenolindophenol (DCPIP), but not with NAD, NADP, or cytochrome c. Also displays a very low oxidase activity in vitro on D-lactate and L-lactate with O2 as the electron acceptor, but this activity is most likely not physiological. This Anaerostipes hadrus protein is D-lactate dehydrogenase.